The primary structure comprises 458 residues: Sphingomyelinase DDB_G0288017 (458 aa).

The interval 91-111 (NKKAKSPPPPSSLKQQNLHNN) is disordered. Position 135 (E135) interacts with Mg(2+). Catalysis depends on H447, which acts as the Proton acceptor.

The protein belongs to the neutral sphingomyelinase family. The cofactor is Mg(2+).

It carries out the reaction a sphingomyelin + H2O = phosphocholine + an N-acylsphing-4-enine + H(+). Its pathway is lipid metabolism; sphingolipid metabolism. In terms of biological role, catalyzes the hydrolysis of sphingomyelin to form ceramide and phosphocholine. The chain is Sphingomyelinase DDB_G0288017 from Dictyostelium discoideum (Social amoeba).